We begin with the raw amino-acid sequence, 279 residues long: HTH-type transcriptional regulator HdfR (279 aa).

The 58-residue stretch at 1-58 folds into the HTH lysR-type domain; it reads MDTELLKTFLEVSRTRHFGRAAESLYLTQSAVSFRIRQLENQLGVNLFTRHRNNIRLT. Positions 18-37 form a DNA-binding region, H-T-H motif; sequence FGRAAESLYLTQSAVSFRIR.

The protein belongs to the LysR transcriptional regulatory family.

Its function is as follows. Negatively regulates the transcription of the flagellar master operon flhDC by binding to the upstream region of the operon. In Escherichia coli O7:K1 (strain IAI39 / ExPEC), this protein is HTH-type transcriptional regulator HdfR.